A 104-amino-acid polypeptide reads, in one-letter code: Co-chaperonin GroES 3 (104 aa).

The protein belongs to the GroES chaperonin family. As to quaternary structure, heptamer of 7 subunits arranged in a ring. Interacts with the chaperonin GroEL.

The protein resides in the cytoplasm. Its function is as follows. Together with the chaperonin GroEL, plays an essential role in assisting protein folding. The GroEL-GroES system forms a nano-cage that allows encapsulation of the non-native substrate proteins and provides a physical environment optimized to promote and accelerate protein folding. GroES binds to the apical surface of the GroEL ring, thereby capping the opening of the GroEL channel. This Bradyrhizobium diazoefficiens (strain JCM 10833 / BCRC 13528 / IAM 13628 / NBRC 14792 / USDA 110) protein is Co-chaperonin GroES 3.